We begin with the raw amino-acid sequence, 325 residues long: Chain length determinant protein (325 aa).

Residues 1–31 (MRVENNNVSGQNHDPEQIDLIDLLVQLWRGK) lie on the Cytoplasmic side of the membrane. A helical membrane pass occupies residues 32–52 (MTIIISVIVAIALAIGYLAVA). Residues 53-294 (KEKWTSTAII…LPIRRDSPKK (242 aa)) lie on the Periplasmic side of the membrane. A helical membrane pass occupies residues 295-315 (AITLILAVLLGGMVGAGIVLG). The Cytoplasmic portion of the chain corresponds to 316-325 (RNALRNYNAK).

Belongs to the WzzB/Cld/Rol family.

The protein localises to the cell inner membrane. It functions in the pathway bacterial outer membrane biogenesis; lipopolysaccharide biosynthesis. Confers a modal distribution of chain length on the O-antigen component of lipopolysaccharide (LPS). Gives rise to a reduced number of short chain molecules and increases in numbers of longer molecules. The polypeptide is Chain length determinant protein (wzzB) (Shigella flexneri).